A 773-amino-acid chain; its full sequence is LON peptidase N-terminal domain and RING finger protein 1 (773 aa).

Residues 1–29 form a disordered region; the sequence is MSSPAVARTSPGGSREMAPAPQGRGRFWE. Residues 48–81 form a TPR 1 repeat; sequence WELLLRRGELLALGGHLKGALEAFAAALRRGAPA. The RING-type 1 zinc-finger motif lies at 123-159; the sequence is CLGCRGFLSEPVTVPCGHSYCRRCLRRELRARCRLCR. TPR repeat units follow at residues 212–244, 246–278, and 279–312; these read ARAAGRLGELLHQGRYREALAAACEALRAEPSD, IVKIYRAESYAGLQEFKAAIEDLNAVLFQLPDW, and PEVYFRKGKVLCDAGFLGDALQLFLQCLALDEDF. The span at 359–370 shows a compositional bias: polar residues; that stretch reads EESQSLNEPSPK. Residues 359–388 form a disordered region; it reads EESQSLNEPSPKQSEEIPEVTSEPVKGSLN. Phosphoserine is present on serine 431. The RING-type 2 zinc-finger motif lies at 479–517; that stretch reads CSLCMRLFFEPVTTPCGHSFCKNCLERCLDHAPYCPLCK. In terms of domain architecture, Lon N-terminal spans 558 to 768; that stretch reads TAELSHLTKN…KIQHILTYFS (211 aa).

The protein is LON peptidase N-terminal domain and RING finger protein 1 (LONRF1) of Homo sapiens (Human).